Consider the following 181-residue polypeptide: NAD(P)H-quinone oxidoreductase subunit I, chloroplastic (181 aa).

2 consecutive 4Fe-4S ferredoxin-type domains span residues 55–84 (GRIHFEFDKCIACEVCVRVCPINLPVVDWE) and 95–124 (KNYSIDFAVCIFCGNCVEYCPTNCLSMTEE). [4Fe-4S] cluster-binding residues include cysteine 64, cysteine 67, cysteine 70, cysteine 74, cysteine 104, cysteine 107, cysteine 110, and cysteine 114.

It belongs to the complex I 23 kDa subunit family. In terms of assembly, NDH is composed of at least 16 different subunits, 5 of which are encoded in the nucleus. [4Fe-4S] cluster is required as a cofactor.

It is found in the plastid. The protein localises to the chloroplast thylakoid membrane. It catalyses the reaction a plastoquinone + NADH + (n+1) H(+)(in) = a plastoquinol + NAD(+) + n H(+)(out). It carries out the reaction a plastoquinone + NADPH + (n+1) H(+)(in) = a plastoquinol + NADP(+) + n H(+)(out). Functionally, NDH shuttles electrons from NAD(P)H:plastoquinone, via FMN and iron-sulfur (Fe-S) centers, to quinones in the photosynthetic chain and possibly in a chloroplast respiratory chain. The immediate electron acceptor for the enzyme in this species is believed to be plastoquinone. Couples the redox reaction to proton translocation, and thus conserves the redox energy in a proton gradient. This chain is NAD(P)H-quinone oxidoreductase subunit I, chloroplastic, found in Angiopteris evecta (Mule's foot fern).